Consider the following 621-residue polypeptide: Uptake hydrogenase large subunit (621 aa).

Residues cysteine 75, cysteine 78, cysteine 600, and cysteine 603 each contribute to the Ni(2+) site.

The protein belongs to the [NiFe]/[NiFeSe] hydrogenase large subunit family. In terms of assembly, heterodimer of a large and a small subunit. Ni(2+) is required as a cofactor.

Its subcellular location is the cell membrane. The enzyme catalyses H2 + A = AH2. In terms of biological role, this enzyme recycles the H(2) produced by nitrogenase to increase the production of ATP and to protect nitrogenase against inhibition or damage by O(2) under carbon- or phosphate-limited conditions. The chain is Uptake hydrogenase large subunit (hupL) from Alcaligenes hydrogenophilus.